The sequence spans 138 residues: Basic phospholipase A2 homolog Tbo-K49 (138 aa).

The N-terminal stretch at 1–16 is a signal peptide; it reads MRTLWIMAVLLVGVEG. Disulfide bonds link Cys42/Cys131, Cys44/Cys60, Cys59/Cys111, Cys65/Cys138, Cys66/Cys104, and Cys91/Cys102. An important for membrane-damaging activities in eukaryotes and bacteria; heparin-binding region spans residues 121–133; that stretch reads KKERINTKIFCKK.

In terms of assembly, monomer. Expressed by the venom gland.

Its subcellular location is the secreted. Functionally, snake venom phospholipase A2 homolog that lacks catalytic activity. It induces local edema. Is myotoxic. A model of myotoxic mechanism has been proposed: an apo Lys49-PLA2 is activated by the entrance of a hydrophobic molecule (e.g. fatty acid) at the hydrophobic channel of the protein leading to a reorientation of a monomer. This reorientation causes a transition between 'inactive' to 'active' states, causing alignment of C-terminal and membrane-docking sites (MDoS) side-by-side and putting the membrane-disruption sites (MDiS) in the same plane, exposed to solvent and in a symmetric position for both monomers. The MDoS region stabilizes the toxin on membrane by the interaction of charged residues with phospholipid head groups. Subsequently, the MDiS region destabilizes the membrane with penetration of hydrophobic residues. This insertion causes a disorganization of the membrane, allowing an uncontrolled influx of ions (i.e. calcium and sodium), and eventually triggering irreversible intracellular alterations and cell death. The protein is Basic phospholipase A2 homolog Tbo-K49 of Craspedocephalus borneensis (Borneo pit viper).